Reading from the N-terminus, the 809-residue chain is Zinc finger CCCH domain-containing protein 24 (809 aa).

M1 is subject to N-acetylmethionine. Positions 1 to 74 (METSSIEINE…NLESSDTKIT (74 aa)) are disordered. The span at 30–46 (ETSSIDELPSSDSNATD) shows a compositional bias: polar residues. Positions 51-65 (VGEKRKRADEDEKTN) are enriched in basic and acidic residues. The segment at 79-107 (WWKTSLCSYFRREASCSHGNECKYAHGEA) adopts a C3H1-type zinc-finger fold. The S-adenosyl-L-methionine site is built by Q536 and E586. The segment at 652-693 (EEMTNSEHVADQNLPPSNTQVEELQDNEQKDSSSLEPEKTTK) is disordered. Over residues 678–692 (NEQKDSSSLEPEKTT) the composition is skewed to basic and acidic residues. D704 provides a ligand contact to S-adenosyl-L-methionine. C732 acts as the Nucleophile in catalysis.

It belongs to the class I-like SAM-binding methyltransferase superfamily. RNA M5U methyltransferase family.

This is Zinc finger CCCH domain-containing protein 24 from Arabidopsis thaliana (Mouse-ear cress).